Consider the following 700-residue polypeptide: Polyphosphate kinase (700 aa).

Asn-45 contacts ATP. Residues Arg-373 and Arg-403 each coordinate Mg(2+). In terms of domain architecture, PLD phosphodiesterase 1 spans 428–462; that stretch reads PGMKIHAKLLLITRREEQGFVRYAHIGTGNFHERT. His-433 (phosphohistidine intermediate) is an active-site residue. The ATP site is built by Tyr-466, Arg-562, and His-590. The PLD phosphodiesterase 2 domain maps to 585–615; the sequence is DRFLEHPRVLVVHNDGDPQVFISSADWMERN.

It belongs to the polyphosphate kinase 1 (PPK1) family. It depends on Mg(2+) as a cofactor. In terms of processing, an intermediate of this reaction is the autophosphorylated ppk in which a phosphate is covalently linked to a histidine residue through a N-P bond.

The enzyme catalyses [phosphate](n) + ATP = [phosphate](n+1) + ADP. Catalyzes the reversible transfer of the terminal phosphate of ATP to form a long-chain polyphosphate (polyP). The chain is Polyphosphate kinase from Vibrio vulnificus (strain CMCP6).